A 614-amino-acid chain; its full sequence is Beta-glucosidase 33 (614 aa).

A signal peptide spans 1–26 (MATATLTLFLGLLALTSTILSFNADA). Residues Q113, H217, and 262-263 (NE) contribute to the a beta-D-glucoside site. The active-site Proton donor is E263. Cysteines 282 and 290 form a disulfide. N-linked (GlcNAc...) asparagine glycosylation occurs at N344. Y407 lines the a beta-D-glucoside pocket. N-linked (GlcNAc...) asparagine glycans are attached at residues N419, N432, and N439. A beta-D-glucoside is bound at residue E479. The active-site Nucleophile is the E479. The N-linked (GlcNAc...) asparagine glycan is linked to N491. A beta-D-glucoside is bound by residues W529, 536 to 537 (EW), and F545.

The protein belongs to the glycosyl hydrolase 1 family.

It carries out the reaction Hydrolysis of terminal, non-reducing beta-D-glucosyl residues with release of beta-D-glucose.. The sequence is that of Beta-glucosidase 33 from Arabidopsis thaliana (Mouse-ear cress).